The following is a 129-amino-acid chain: uncharacterized protein (129 aa).

A disordered region spans residues Ser-34 to Val-57.

This is an uncharacterized protein from Homo sapiens (Human).